The sequence spans 948 residues: METHHIDFSTVLDVSALKAECEALAKRGLDKNEERSALLALLKKASQDGREEARRLLIADGSGLNCAHRISWLQDQIITVLYDLTVHHAYPKQAGVFSVTAVGGYGRDTLAPGSDIDLLFLFQPKPASETHKAVEFILYMLWDMGFKVGHATRSVEECIREAKSDMTVRTAILETRYICGNVALERELQARFDKEIVTNTGPEFIAAKLAERDERHRKAGDTRYLVEPNVKEGKGGLRDLHTLFWISKYYYHVRDPAELVKLGVLSKQEYRLFEKAEDFLWAVRCHMHFLTGKAEERLSFDIQRDIAAALDYNARPGLSAVERFMKHYFLVAKDVGDLTRILCAALEDQQAKATPGLTGVISRFANRSRKIPGTVEFVEDRGRIALANPDVFKRDPVSLIRLFFVADINGLEFHPDALKRVTRSLSLIDNDLRENEEANRLFLSILTSKRDPALILRRMNEAGVLGRFIPEFGKIVSMMQFNMYHHYTVDEHLIRAVEVLSEIDKGRAEDIHPLTNKLMPNIEDRDALYVAVLLHDIAKGREEDHSEAGAAVARKLCPRFGLSPKQTELVVWLIAEHLTMSMVAQTRDLTDRKTIIDFADRVQSLDRLKMLLILTVCDIRAVGPGVWNGWKGQLLRTLYYETELLLSGGFSEVSRKERAEAAAEALEHALADWSQKERKAYVKLHYQPYLLSVPLEDQIRHTQFMRESDKAGKVLATMVRTDSFHAITEITVLSPDHPRLLTVIAGACAAAGANIADAQIFTTSDGRALDTIHVSREFPDDADELRRAATIGKMIEDVLAGRKRLPEVIATRTKNRRKNKAFVIPPSVIITNSLSNKFTVIEVECLDRPGLLSEITAVLSDLSLDIQSARITTFGEKVIDTFYVADLVGQKISNENRRAYITARLKAVMAGEEDEMRERMPSGIIAPAATRGVAVEKSDTEKKAGSAA.

A uridylyltransferase region spans residues 1–372 (METHHIDFST…RFANRSRKIP (372 aa)). The tract at residues 373–728 (GTVEFVEDRG…VRTDSFHAIT (356 aa)) is uridylyl-removing. One can recognise an HD domain in the interval 489-605 (VDEHLIRAVE…IDFADRVQSL (117 aa)). 2 consecutive ACT domains span residues 729–810 (EITV…EVIA) and 840–921 (VIEV…ERMP).

Belongs to the GlnD family. The cofactor is Mg(2+).

It catalyses the reaction [protein-PII]-L-tyrosine + UTP = [protein-PII]-uridylyl-L-tyrosine + diphosphate. The enzyme catalyses [protein-PII]-uridylyl-L-tyrosine + H2O = [protein-PII]-L-tyrosine + UMP + H(+). Its activity is regulated as follows. Uridylyltransferase (UTase) activity is inhibited by glutamine, while glutamine activates uridylyl-removing (UR) activity. Its function is as follows. Modifies, by uridylylation and deuridylylation, the PII regulatory proteins (GlnB and homologs), in response to the nitrogen status of the cell that GlnD senses through the glutamine level. Under low glutamine levels, catalyzes the conversion of the PII proteins and UTP to PII-UMP and PPi, while under higher glutamine levels, GlnD hydrolyzes PII-UMP to PII and UMP (deuridylylation). Thus, controls uridylylation state and activity of the PII proteins, and plays an important role in the regulation of nitrogen fixation and metabolism. In Rhizobium tropici, this protein is Bifunctional uridylyltransferase/uridylyl-removing enzyme.